The following is a 698-amino-acid chain: Elongation factor G (698 aa).

The tr-type G domain maps to 8-290; that stretch reads ERYRNIGISA…AVIELLPSPT (283 aa). GTP is bound by residues 17–24, 88–92, and 142–145; these read AHIDAGKT, DTPGH, and NKMD.

This sequence belongs to the TRAFAC class translation factor GTPase superfamily. Classic translation factor GTPase family. EF-G/EF-2 subfamily.

The protein localises to the cytoplasm. Its function is as follows. Catalyzes the GTP-dependent ribosomal translocation step during translation elongation. During this step, the ribosome changes from the pre-translocational (PRE) to the post-translocational (POST) state as the newly formed A-site-bound peptidyl-tRNA and P-site-bound deacylated tRNA move to the P and E sites, respectively. Catalyzes the coordinated movement of the two tRNA molecules, the mRNA and conformational changes in the ribosome. This chain is Elongation factor G, found in Chromobacterium violaceum (strain ATCC 12472 / DSM 30191 / JCM 1249 / CCUG 213 / NBRC 12614 / NCIMB 9131 / NCTC 9757 / MK).